The chain runs to 397 residues: Protein RecA (397 aa).

The interval 1–23 (MALETKPAKDPAAEDKHELDPKR) is disordered. 83-90 (GPESSGKT) contacts ATP.

This sequence belongs to the RecA family.

The protein resides in the cytoplasm. Its function is as follows. Can catalyze the hydrolysis of ATP in the presence of single-stranded DNA, the ATP-dependent uptake of single-stranded DNA by duplex DNA, and the ATP-dependent hybridization of homologous single-stranded DNAs. It interacts with LexA causing its activation and leading to its autocatalytic cleavage. In Bifidobacterium longum (strain NCC 2705), this protein is Protein RecA.